Consider the following 172-residue polypeptide: MSTPARRRLMRDFKRMKEDAPPGVSASPLPDNVMVWNAMIIGPADTPYEDGTFRLLLEFDEEYPNKPPHVKFLSEMFHPNVYANGEICLDILQNRWTPTYDVASILTSIQSLFNDPNPASPANVEAATLFKDHKSQYVKRVKETVEKSWEDDMDDMDDDDDDDDDDDDDEAD.

In terms of domain architecture, UBC core spans 4 to 150 (PARRRLMRDF…VKETVEKSWE (147 aa)). Cys88 (glycyl thioester intermediate) is an active-site residue. Ser120 carries the phosphoserine; by SGV1 modification. The tract at residues 145 to 172 (VEKSWEDDMDDMDDDDDDDDDDDDDEAD) is disordered. The span at 151–172 (DDMDDMDDDDDDDDDDDDDEAD) shows a compositional bias: acidic residues.

Belongs to the ubiquitin-conjugating enzyme family. Forms a heterodimer complexes with the E3 enzymes BRE1, RAD18 and UBR1. Also interacts with UBR2, RTF1, PAF1 and the RNA polymerase II hyperphosphorylated form. The interaction with RNA polymerase II is BRE1- and PAF1-dependent. The N-terminus is blocked.

It localises to the cytoplasm. The protein resides in the nucleus. The enzyme catalyses S-ubiquitinyl-[E1 ubiquitin-activating enzyme]-L-cysteine + [E2 ubiquitin-conjugating enzyme]-L-cysteine = [E1 ubiquitin-activating enzyme]-L-cysteine + S-ubiquitinyl-[E2 ubiquitin-conjugating enzyme]-L-cysteine.. It functions in the pathway protein modification; protein ubiquitination. Its function is as follows. E2 ubiquitin-conjugating enzyme that accepts ubiquitin from the ubiquitin-activating enzyme E1 and transfers it to a E3 ubiquitin-protein ligase. In association with the E3 enzyme BRE1 and LGE1, it plays a role in transcription regulation by catalyzing the monoubiquitination of histone H2B to form H2BK123ub1. H2BK123ub1 gives a specific tag for epigenetic transcriptional activation, elongation by RNA polymerase II, telomeric silencing, and is also a prerequisite for H3K4me and H3K79me formation. In association with the E3 enzyme RAD18, it catalyzes the monoubiquitination of POL30 'Lys-164', involved in postreplication repair of UV-damaged DNA. The RAD6/UBC2-RAD18 complex is also involved in prevention of spontaneous mutations caused by 7,8-dihydro-8-oxoguanine. In association with the E3 enzyme UBR1, is involved in N-end rule-dependent protein degradation. Also involved in sporulation. This chain is Ubiquitin-conjugating enzyme E2 2 (RAD6), found in Saccharomyces cerevisiae (strain ATCC 204508 / S288c) (Baker's yeast).